The primary structure comprises 198 residues: 7-methyl-GTP pyrophosphatase (198 aa).

The active-site Proton acceptor is Asp69.

It belongs to the Maf family. YceF subfamily. Requires a divalent metal cation as cofactor.

It is found in the cytoplasm. The enzyme catalyses N(7)-methyl-GTP + H2O = N(7)-methyl-GMP + diphosphate + H(+). Its function is as follows. Nucleoside triphosphate pyrophosphatase that hydrolyzes 7-methyl-GTP (m(7)GTP). May have a dual role in cell division arrest and in preventing the incorporation of modified nucleotides into cellular nucleic acids. In Yersinia pestis bv. Antiqua (strain Antiqua), this protein is 7-methyl-GTP pyrophosphatase.